Consider the following 443-residue polypeptide: Glucose-6-phosphate isomerase (443 aa).

The active-site Proton donor is the E285. Residues H306 and K420 contribute to the active site.

Belongs to the GPI family.

The protein resides in the cytoplasm. The catalysed reaction is alpha-D-glucose 6-phosphate = beta-D-fructose 6-phosphate. The protein operates within carbohydrate biosynthesis; gluconeogenesis. Its pathway is carbohydrate degradation; glycolysis; D-glyceraldehyde 3-phosphate and glycerone phosphate from D-glucose: step 2/4. Functionally, catalyzes the reversible isomerization of glucose-6-phosphate to fructose-6-phosphate. The polypeptide is Glucose-6-phosphate isomerase (Staphylococcus epidermidis (strain ATCC 12228 / FDA PCI 1200)).